The chain runs to 325 residues: GTP 3',8-cyclase (325 aa).

A Radical SAM core domain is found at 4–219; sequence NYNRNINYLR…HGLQQKFGLL (216 aa). R13 lines the GTP pocket. [4Fe-4S] cluster is bound by residues C20 and C24. Y26 is an S-adenosyl-L-methionine binding site. C27 contributes to the [4Fe-4S] cluster binding site. R63 serves as a coordination point for GTP. Residue G67 participates in S-adenosyl-L-methionine binding. T94 is a binding site for GTP. S118 contributes to the S-adenosyl-L-methionine binding site. Position 155 (K155) interacts with GTP. M189 contributes to the S-adenosyl-L-methionine binding site. Residues C254 and C257 each contribute to the [4Fe-4S] cluster site. 259 to 261 is a binding site for GTP; it reads RLR. C271 serves as a coordination point for [4Fe-4S] cluster.

It belongs to the radical SAM superfamily. MoaA family. Monomer and homodimer. The cofactor is [4Fe-4S] cluster.

It carries out the reaction GTP + AH2 + S-adenosyl-L-methionine = (8S)-3',8-cyclo-7,8-dihydroguanosine 5'-triphosphate + 5'-deoxyadenosine + L-methionine + A + H(+). It functions in the pathway cofactor biosynthesis; molybdopterin biosynthesis. In terms of biological role, catalyzes the cyclization of GTP to (8S)-3',8-cyclo-7,8-dihydroguanosine 5'-triphosphate. This Desulforamulus reducens (strain ATCC BAA-1160 / DSM 100696 / MI-1) (Desulfotomaculum reducens) protein is GTP 3',8-cyclase.